We begin with the raw amino-acid sequence, 490 residues long: UDP-glycosyltransferase 73C7 (490 aa).

UDP-alpha-D-glucose is bound by residues serine 291, 351-353 (APQ), 368-376 (HCGWNSTLE), and 390-393 (FAEQ).

This sequence belongs to the UDP-glycosyltransferase family.

The chain is UDP-glycosyltransferase 73C7 (UGT73C7) from Arabidopsis thaliana (Mouse-ear cress).